A 258-amino-acid polypeptide reads, in one-letter code: NAD-capped RNA hydrolase NudC (258 aa).

Arg69 is a binding site for substrate. Zn(2+) is bound by residues Cys98 and Cys101. Glu111 is a substrate binding site. Residues Cys116 and Cys119 each coordinate Zn(2+). Tyr124 provides a ligand contact to substrate. Residues 125 to 248 (PQIAPCIIVA…TVARRLIEDT (124 aa)) form the Nudix hydrolase domain. Residues Ala158, Glu174, and Glu178 each coordinate a divalent metal cation. Positions 159–180 (GFVEVGETLEQTVAREVMEESG) match the Nudix box motif. 192–199 (QPWPFPMS) lines the substrate pocket. Position 219 (Glu219) interacts with a divalent metal cation. Ala241 contacts substrate.

The protein belongs to the Nudix hydrolase family. NudC subfamily. In terms of assembly, homodimer. The cofactor is Mg(2+). Mn(2+) is required as a cofactor. It depends on Zn(2+) as a cofactor.

The enzyme catalyses a 5'-end NAD(+)-phospho-ribonucleoside in mRNA + H2O = a 5'-end phospho-adenosine-phospho-ribonucleoside in mRNA + beta-nicotinamide D-ribonucleotide + 2 H(+). It carries out the reaction NAD(+) + H2O = beta-nicotinamide D-ribonucleotide + AMP + 2 H(+). It catalyses the reaction NADH + H2O = reduced beta-nicotinamide D-ribonucleotide + AMP + 2 H(+). Functionally, mRNA decapping enzyme that specifically removes the nicotinamide adenine dinucleotide (NAD) cap from a subset of mRNAs by hydrolyzing the diphosphate linkage to produce nicotinamide mononucleotide (NMN) and 5' monophosphate mRNA. The NAD-cap is present at the 5'-end of some mRNAs and stabilizes RNA against 5'-processing. Has preference for mRNAs with a 5'-end purine. Catalyzes the hydrolysis of a broad range of dinucleotide pyrophosphates. In Enterobacter sp. (strain 638), this protein is NAD-capped RNA hydrolase NudC.